A 310-amino-acid chain; its full sequence is Mas-related G-protein coupled receptor member E (310 aa).

Residues 1-22 are Extracellular-facing; sequence MTSLSVHTDSPSTQGEMAFNLT. N20 carries N-linked (GlcNAc...) asparagine glycosylation. Residues 23 to 43 form a helical membrane-spanning segment; it reads ILSLTELLSLGGLLGNGVALW. Over 44–60 the chain is Cytoplasmic; sequence LLNQNVYRNPFSIYLLD. The helical transmembrane segment at 61–81 threads the bilayer; that stretch reads VACADLIFLCCHMVAIIPELL. At 82–92 the chain is on the extracellular side; the sequence is QDQLNFPEFVH. A helical transmembrane segment spans residues 93–113; that stretch reads ISLTMLRFFCYIVGLSLLAAI. The Cytoplasmic portion of the chain corresponds to 114–133; that stretch reads STEQCLATLFPAWYLCRRPR. A helical transmembrane segment spans residues 134 to 154; the sequence is YLTTCVCALIWVLCLLLDLLL. The Extracellular portion of the chain corresponds to 155-174; that stretch reads SGACTQFFGAPSYHLCDMLW. A helical membrane pass occupies residues 175-195; it reads LVVAVLLAALCCTMCVTSLLL. Over 196–213 the chain is Cytoplasmic; it reads LLRVERGPERHQPRGFPT. The chain crosses the membrane as a helical span at residues 214–234; it reads LVLLAVLLFLFCGLPFGIFWL. At 235 to 248 the chain is on the extracellular side; sequence SKNLSWHIPLYFYH. N237 is a glycosylation site (N-linked (GlcNAc...) asparagine). The helical transmembrane segment at 249–269 threads the bilayer; the sequence is FSFFMASVHSAAKPAIYFFLG. Over 270–310 the chain is Cytoplasmic; it reads STPGQRFREPLRLVLQRALGDEAELGAGREASQGGLVDMTV.

The protein belongs to the G-protein coupled receptor 1 family. Mas subfamily.

The protein localises to the cell membrane. In terms of biological role, orphan receptor. May regulate nociceptor function and/or development, including the sensation or modulation of pain. This is Mas-related G-protein coupled receptor member E (Mrgpre) from Mus musculus (Mouse).